Reading from the N-terminus, the 237-residue chain is Small ribosomal subunit protein eS4 (237 aa).

The S4 RNA-binding domain maps to 38-110 (LPLAVVVRDV…EAKYYDLKPI (73 aa)).

Belongs to the eukaryotic ribosomal protein eS4 family.

This chain is Small ribosomal subunit protein eS4, found in Pyrobaculum calidifontis (strain DSM 21063 / JCM 11548 / VA1).